The following is a 310-amino-acid chain: Ribonuclease Z (310 aa).

The Zn(2+) site is built by His64, His66, Asp68, His69, His146, Asp215, and His273. Catalysis depends on Asp68, which acts as the Proton acceptor.

The protein belongs to the RNase Z family. Homodimer. The cofactor is Zn(2+).

It catalyses the reaction Endonucleolytic cleavage of RNA, removing extra 3' nucleotides from tRNA precursor, generating 3' termini of tRNAs. A 3'-hydroxy group is left at the tRNA terminus and a 5'-phosphoryl group is left at the trailer molecule.. Zinc phosphodiesterase, which displays some tRNA 3'-processing endonuclease activity. Probably involved in tRNA maturation, by removing a 3'-trailer from precursor tRNA. This chain is Ribonuclease Z, found in Aeropyrum pernix (strain ATCC 700893 / DSM 11879 / JCM 9820 / NBRC 100138 / K1).